The chain runs to 237 residues: MVGENTDRSALLEKLGVDIDPELLELALTHRSYAYENGGIPNNERLEFLGDSILGQAVTVKLFRENPGLDEGELAKRRASLVSSVALAEVARGIGLGEYLLLGRGENQSGGREKASILADTVEAVIGAVYLDAGGDEATALVLRLIGPLLADPDRFGAAMDPKTSLQEAAAHHGAGQPVYTVINTGPDHSKTFHATVDVGGLVTASGEGTSKKQAEMAAALSAWTALTNHRARTPRG.

The RNase III domain maps to 8–134 (RSALLEKLGV…VIGAVYLDAG (127 aa)). Residue E47 participates in Mg(2+) binding. Residue D51 is part of the active site. D120 and E123 together coordinate Mg(2+). The active site involves E123. The region spanning 161–229 (DPKTSLQEAA…ALSAWTALTN (69 aa)) is the DRBM domain.

This sequence belongs to the ribonuclease III family. As to quaternary structure, homodimer. Requires Mg(2+) as cofactor.

The protein resides in the cytoplasm. The enzyme catalyses Endonucleolytic cleavage to 5'-phosphomonoester.. Digests double-stranded RNA. Involved in the processing of primary rRNA transcript to yield the immediate precursors to the large and small rRNAs (23S and 16S). Processes some mRNAs, and tRNAs when they are encoded in the rRNA operon. Processes pre-crRNA and tracrRNA of type II CRISPR loci if present in the organism. In Leifsonia xyli subsp. xyli (strain CTCB07), this protein is Ribonuclease 3.